A 352-amino-acid chain; its full sequence is tRNA-specific 2-thiouridylase MnmA (352 aa).

ATP is bound by residues 9-16 and M35; that span reads ALSGGVDS. Catalysis depends on C96, which acts as the Nucleophile. A disulfide bridge connects residues C96 and C192. Position 120 (G120) interacts with ATP. Residues 142-144 form an interaction with tRNA region; that stretch reads KDQ. The active-site Cysteine persulfide intermediate is the C192. The segment at 299 to 300 is interaction with tRNA; that stretch reads RY.

It belongs to the MnmA/TRMU family.

The protein resides in the cytoplasm. The catalysed reaction is S-sulfanyl-L-cysteinyl-[protein] + uridine(34) in tRNA + AH2 + ATP = 2-thiouridine(34) in tRNA + L-cysteinyl-[protein] + A + AMP + diphosphate + H(+). Catalyzes the 2-thiolation of uridine at the wobble position (U34) of tRNA, leading to the formation of s(2)U34. The chain is tRNA-specific 2-thiouridylase MnmA from Acidithiobacillus ferrooxidans (strain ATCC 23270 / DSM 14882 / CIP 104768 / NCIMB 8455) (Ferrobacillus ferrooxidans (strain ATCC 23270)).